Here is a 1409-residue protein sequence, read N- to C-terminus: DNA-directed RNA polymerase subunit beta' (1409 aa).

Zn(2+) is bound by residues cysteine 69, cysteine 71, cysteine 84, and cysteine 87. Mg(2+) contacts are provided by aspartate 461, aspartate 463, and aspartate 465. Zn(2+) contacts are provided by cysteine 805, cysteine 879, cysteine 886, and cysteine 889.

It belongs to the RNA polymerase beta' chain family. The RNAP catalytic core consists of 2 alpha, 1 beta, 1 beta' and 1 omega subunit. When a sigma factor is associated with the core the holoenzyme is formed, which can initiate transcription. The cofactor is Mg(2+). Requires Zn(2+) as cofactor.

The enzyme catalyses RNA(n) + a ribonucleoside 5'-triphosphate = RNA(n+1) + diphosphate. DNA-dependent RNA polymerase catalyzes the transcription of DNA into RNA using the four ribonucleoside triphosphates as substrates. The protein is DNA-directed RNA polymerase subunit beta' of Anaplasma phagocytophilum (strain HZ).